Here is a 400-residue protein sequence, read N- to C-terminus: MLRWFTAGESHGMELVAILEGLPAGIPVSLEHIGNELSRRRLGFGRSARQKFEKDLVTLSAGVLHGSTLGSPVAIRITNSEWGKWEKIMTPEVPCKSDMSDAKRAQGLYKPRPGHADLVGMQKYGFQNSRLVLERASARETAARVACGAVAKAFLQQLDIFILSHVKQIGSIKIDYEQGAYPRFCDLEAIDSSPVRCFDKNTSEKMKDELHRIKRCGDTLGGVFEVLAYGLPPGLGSYVHWDRRLDAMLSAAIMSIQAVKAVEIGDGLAISALPGSEAHDQIVLESGLLTRMSNHSGGVEGGVTTGSALRISGSMKPISTVPRALKTVDISTRQPANADHQRSDICAVPAAAVVGESMVALTISCAILDKFGGDSLCEIKRNFSGYLNSIPKNLMSVIER.

Residues Arg-40 and Arg-46 each contribute to the NADP(+) site. FMN-binding positions include 135–137 (RAS), 257–258 (QA), Gly-301, 316–320 (KPIST), and Arg-342.

The protein belongs to the chorismate synthase family. As to quaternary structure, homotetramer. It depends on FMNH2 as a cofactor.

The enzyme catalyses 5-O-(1-carboxyvinyl)-3-phosphoshikimate = chorismate + phosphate. The protein operates within metabolic intermediate biosynthesis; chorismate biosynthesis; chorismate from D-erythrose 4-phosphate and phosphoenolpyruvate: step 7/7. Its function is as follows. Catalyzes the anti-1,4-elimination of the C-3 phosphate and the C-6 proR hydrogen from 5-enolpyruvylshikimate-3-phosphate (EPSP) to yield chorismate, which is the branch point compound that serves as the starting substrate for the three terminal pathways of aromatic amino acid biosynthesis. This reaction introduces a second double bond into the aromatic ring system. This Tropheryma whipplei (strain TW08/27) (Whipple's bacillus) protein is Chorismate synthase.